The primary structure comprises 164 residues: Cytochrome c-type biogenesis protein CcmE (164 aa).

At 1–8 the chain is on the cytoplasmic side; the sequence is MNPRRKKR. Residues 9–29 form a helical; Signal-anchor for type II membrane protein membrane-spanning segment; sequence LTLAVALIGGVAAIASLLLYA. At 30 to 164 the chain is on the periplasmic side; that stretch reads LNSNLNLFFT…EDQSKAGGYK (135 aa). 2 residues coordinate heme: H131 and Y135. Residues 140 to 164 are disordered; that stretch reads VAEAMGQSHEKLDYSEDQSKAGGYK. A compositionally biased stretch (basic and acidic residues) spans 147-158; the sequence is SHEKLDYSEDQS.

The protein belongs to the CcmE/CycJ family.

It localises to the cell inner membrane. Its function is as follows. Heme chaperone required for the biogenesis of c-type cytochromes. Transiently binds heme delivered by CcmC and transfers the heme to apo-cytochromes in a process facilitated by CcmF and CcmH. The sequence is that of Cytochrome c-type biogenesis protein CcmE from Shewanella piezotolerans (strain WP3 / JCM 13877).